The following is a 435-amino-acid chain: Serine/threonine-protein kinase 40 (435 aa).

Positions 1–10 (MKRRASDRGA) are enriched in basic and acidic residues. Positions 1 to 25 (MKRRASDRGAGETSARAKALGSGIS) are disordered. A Protein kinase domain is found at 35-331 (FILGPRLGNS…ADVLEALSAI (297 aa)). Residues 41–49 (LGNSPVPSI) and K66 each bind ATP. R196 serves as the catalytic Proton acceptor.

It belongs to the protein kinase superfamily. CAMK Ser/Thr protein kinase family. In terms of tissue distribution, strongly expressed in heart, brain, placenta, lung, skeletal muscle, kidney, spleen, thymus, prostate, liver, pancreas, testis, ovary, small intestine, colon and peripheral blood leukocytes.

It is found in the nucleus. The protein localises to the cytoplasm. It carries out the reaction L-seryl-[protein] + ATP = O-phospho-L-seryl-[protein] + ADP + H(+). It catalyses the reaction L-threonyl-[protein] + ATP = O-phospho-L-threonyl-[protein] + ADP + H(+). Functionally, may be a negative regulator of NF-kappa-B and p53-mediated gene transcription. The sequence is that of Serine/threonine-protein kinase 40 (STK40) from Homo sapiens (Human).